A 988-amino-acid chain; its full sequence is Echinoderm microtubule-associated protein-like 4 (988 aa).

Position 1 is an N-acetylmethionine (M1). Positions 1 to 260 (MDGFAGSLDD…IPSDVDNYDD (260 aa)) are microtubule-binding. 5 positions are modified to phosphoserine: S7, S13, S16, S61, and S79. Residues 14 to 63 (AASTSDVQDRLSALESRVQQQEDEITVLKAALADVLRRLAISEDHVASVK) adopt a coiled-coil conformation. T96 is subject to Phosphothreonine. The tract at residues 106-194 (TLSSAAKSGT…WENSDDSRNK (89 aa)) is disordered. Positions 114-134 (GTEKKKEKPQGQREKKEDSHS) are enriched in basic and acidic residues. A Phosphoserine; by NEK7 modification is found at S134. The segment covering 137–155 (QSPQIRASPSPQPSSQPLQ) has biased composition (low complexity). At S144 the chain carries Phosphoserine; by NEK6. At S146 the chain carries Phosphoserine; by NEK7. Over residues 156-168 (INRQTPESKSSAP) the composition is skewed to polar residues. At S171 the chain carries Phosphoserine. Basic and acidic residues predominate over residues 176-193 (PTAEKSHNSWENSDDSRN). At S200 the chain carries Phosphoserine. T201 bears the Phosphothreonine mark. The residue at position 237 (Y237) is a Phosphotyrosine. A Phosphothreonine modification is found at T248. WD repeat units lie at residues 270–308 (LKLEWVYGYRGKDCRANVYLLPTGEIVYFIASVVVLFNY), 312–359 (TQRH…VWDS), 367–407 (VIGL…VWDW), 414–449 (AEIKTTNEVVLAVEFHPTDANTIITCGKSHIFFWTW), 456–495 (RKQGIFGKYEKPKFVQCLAFLGNGDVLTGDSGGVMLIWSK), 511–549 (QINRQIKAHDGSVFTLCQMRNGMLLTGGGKDRKIILWDH), 554–590 (EREIEVPDQYGTIRAVAEGRAEQFLVGTSRNFILRGT), 593–632 (DGFQIEVQGHRDELWGLATHPFKDLLLTCAQDRQVCMWNS), 636–673 (RLEWTRLVDEPGHCADFHPSGTVVAIGTHSGRWFVLDA), 679–715 (VSIHTDGNEQLSVMRYSVDGTLLAVGSHDNFIYLYTV), 722–761 (YSRYGKCTGHSSYITHLDWSPDNKHIMSNSGDYEILYWDI), 771–829 (RSDC…LFQY), and 836–875 (APSHKYSAHSSHVTNVSFTHNDSHLISTGGKDMSIIQWKL). Position 620 is a phosphothreonine; by NEK6 and NEK7 (T620). Positions 887-988 (ITDASVTKTP…EEERGITPLC (102 aa)) are disordered. A compositionally biased stretch (polar residues) spans 890 to 904 (ASVTKTPASSSETAR). Phosphoserine is present on residues S906, S908, and S914. The span at 927-939 (MGSSPTLVENSLE) shows a compositional bias: polar residues. Residues 944-953 (PSEEQSEWGS) are compositionally biased toward acidic residues.

The protein belongs to the WD repeat EMAP family. As to quaternary structure, homotrimer; self-association is mediated by the N-terminal coiled coil. Interacts (via WD repeats) with NUDC. Interacts with alpha- and beta-tubulin during mitosis. In terms of processing, phosphorylated during mitosis. Phosphorylation at Ser-144 and Ser-146 promotes its dissociation from microtubules during mitosis which is required for efficient chromosome congression.

The protein resides in the cytoplasm. Its subcellular location is the cytoskeleton. The protein localises to the spindle. It localises to the microtubule organizing center. It is found in the midbody. In terms of biological role, essential for the stability of microtubules (MTs). Essential for the formation of MTs. Required for the organization of the mitotic spindle and for the proper attachment of kinetochores to MTs. Promotes the recruitment of NUDC to the mitotic spindle for mitotic progression. This is Echinoderm microtubule-associated protein-like 4 (Eml4) from Mus musculus (Mouse).